Reading from the N-terminus, the 160-residue chain is SsrA-binding protein (160 aa).

Belongs to the SmpB family.

The protein resides in the cytoplasm. In terms of biological role, required for rescue of stalled ribosomes mediated by trans-translation. Binds to transfer-messenger RNA (tmRNA), required for stable association of tmRNA with ribosomes. tmRNA and SmpB together mimic tRNA shape, replacing the anticodon stem-loop with SmpB. tmRNA is encoded by the ssrA gene; the 2 termini fold to resemble tRNA(Ala) and it encodes a 'tag peptide', a short internal open reading frame. During trans-translation Ala-aminoacylated tmRNA acts like a tRNA, entering the A-site of stalled ribosomes, displacing the stalled mRNA. The ribosome then switches to translate the ORF on the tmRNA; the nascent peptide is terminated with the 'tag peptide' encoded by the tmRNA and targeted for degradation. The ribosome is freed to recommence translation, which seems to be the essential function of trans-translation. This Citrobacter koseri (strain ATCC BAA-895 / CDC 4225-83 / SGSC4696) protein is SsrA-binding protein.